Here is an 803-residue protein sequence, read N- to C-terminus: Translation initiation factor IF-2 (803 aa).

Disordered regions lie at residues Pro95 to Glu125 and Glu138 to Glu178. Residues Val111–Asn121 are compositionally biased toward polar residues. Residues Glu138–Lys155 are compositionally biased toward basic and acidic residues. Positions Lys156 to Lys167 are enriched in basic residues. Positions Pro168–Glu178 are enriched in basic and acidic residues. Residues Pro302 to Lys471 form the tr-type G domain. Positions Gly311–Thr318 are G1. Gly311–Thr318 is a binding site for GTP. The segment at Gly336 to His340 is G2. A G3 region spans residues Asp357–Gly360. Residues Asp357–His361 and Asn411–Asp414 each bind GTP. A G4 region spans residues Asn411 to Asp414. The segment at Ser447–Lys449 is G5.

Belongs to the TRAFAC class translation factor GTPase superfamily. Classic translation factor GTPase family. IF-2 subfamily.

Its subcellular location is the cytoplasm. Functionally, one of the essential components for the initiation of protein synthesis. Protects formylmethionyl-tRNA from spontaneous hydrolysis and promotes its binding to the 30S ribosomal subunits. Also involved in the hydrolysis of GTP during the formation of the 70S ribosomal complex. In Coxiella burnetii (strain CbuK_Q154) (Coxiella burnetii (strain Q154)), this protein is Translation initiation factor IF-2.